Consider the following 424-residue polypeptide: Phosphoribosylamine--glycine ligase (424 aa).

In terms of domain architecture, ATP-grasp spans 107–313 (KTFMKKYGIP…FLETLLNFYE (207 aa)). 133-194 (VEKVGAPIVV…EEFLEGEEAS (62 aa)) contributes to the ATP binding site. Mg(2+)-binding residues include Glu283 and Asn285.

The protein belongs to the GARS family. It depends on Mg(2+) as a cofactor. The cofactor is Mn(2+).

It catalyses the reaction 5-phospho-beta-D-ribosylamine + glycine + ATP = N(1)-(5-phospho-beta-D-ribosyl)glycinamide + ADP + phosphate + H(+). The protein operates within purine metabolism; IMP biosynthesis via de novo pathway; N(1)-(5-phospho-D-ribosyl)glycinamide from 5-phospho-alpha-D-ribose 1-diphosphate: step 2/2. The protein is Phosphoribosylamine--glycine ligase of Aquifex aeolicus (strain VF5).